The sequence spans 459 residues: Pentatricopeptide repeat-containing protein At1g07740, mitochondrial (459 aa).

The N-terminal 20 residues, methionine 1 to histidine 20, are a transit peptide targeting the mitochondrion. Residues arginine 19 to lysine 41 are disordered. A compositionally biased stretch (basic and acidic residues) spans serine 24–lysine 41. PPR repeat units follow at residues aspartate 80–cysteine 114, arginine 115–arginine 149, threonine 150–proline 184, asparagine 185–proline 219, serine 220–proline 254, asparagine 255–proline 289, glycine 290–proline 324, aspartate 325–proline 359, asparagine 360–proline 394, and threonine 395–phenylalanine 429.

It belongs to the PPR family. P subfamily.

Its subcellular location is the mitochondrion. This chain is Pentatricopeptide repeat-containing protein At1g07740, mitochondrial, found in Arabidopsis thaliana (Mouse-ear cress).